The sequence spans 372 residues: Glutamate 5-kinase (372 aa).

An ATP-binding site is contributed by lysine 6. Substrate is bound by residues serine 46, aspartate 133, and asparagine 145. ATP-binding positions include 165–166 and 207–213; these read TD and TGGMYTK. Residues 272-350 form the PUA domain; that stretch reads NGFLFVDEGA…HDIESILGYK (79 aa).

Belongs to the glutamate 5-kinase family.

The protein resides in the cytoplasm. The catalysed reaction is L-glutamate + ATP = L-glutamyl 5-phosphate + ADP. The protein operates within amino-acid biosynthesis; L-proline biosynthesis; L-glutamate 5-semialdehyde from L-glutamate: step 1/2. Catalyzes the transfer of a phosphate group to glutamate to form L-glutamate 5-phosphate. The polypeptide is Glutamate 5-kinase (Caldanaerobacter subterraneus subsp. tengcongensis (strain DSM 15242 / JCM 11007 / NBRC 100824 / MB4) (Thermoanaerobacter tengcongensis)).